The chain runs to 360 residues: Phenylalanine--tRNA ligase alpha subunit (360 aa).

Residue E260 participates in Mg(2+) binding.

The protein belongs to the class-II aminoacyl-tRNA synthetase family. Phe-tRNA synthetase alpha subunit type 1 subfamily. Tetramer of two alpha and two beta subunits. Mg(2+) is required as a cofactor.

The protein localises to the cytoplasm. It carries out the reaction tRNA(Phe) + L-phenylalanine + ATP = L-phenylalanyl-tRNA(Phe) + AMP + diphosphate + H(+). In Rhizobium johnstonii (strain DSM 114642 / LMG 32736 / 3841) (Rhizobium leguminosarum bv. viciae), this protein is Phenylalanine--tRNA ligase alpha subunit.